A 285-amino-acid chain; its full sequence is Pantothenate synthetase (285 aa).

Residue 30 to 37 (MGNLHDGH) participates in ATP binding. The active-site Proton donor is His37. Gln61 provides a ligand contact to (R)-pantoate. Gln61 lines the beta-alanine pocket. An ATP-binding site is contributed by 149–152 (GEKD). Gln155 contacts (R)-pantoate. Residues Ile178 and 186–189 (LSSR) contribute to the ATP site.

This sequence belongs to the pantothenate synthetase family. As to quaternary structure, homodimer.

It localises to the cytoplasm. It carries out the reaction (R)-pantoate + beta-alanine + ATP = (R)-pantothenate + AMP + diphosphate + H(+). It functions in the pathway cofactor biosynthesis; (R)-pantothenate biosynthesis; (R)-pantothenate from (R)-pantoate and beta-alanine: step 1/1. Catalyzes the condensation of pantoate with beta-alanine in an ATP-dependent reaction via a pantoyl-adenylate intermediate. In Buchnera aphidicola subsp. Acyrthosiphon pisum (strain 5A), this protein is Pantothenate synthetase.